The chain runs to 479 residues: Spindly-like protein spdl-1 (479 aa).

Coiled coils occupy residues 4-180 (DEEK…EGEL), 210-250 (EEDL…RFNV), and 321-357 (LMKDNEKYVTIIRGLQQEVENLKADIVQLQFDNKCAH).

Interacts with Zwilch homolog zwl-1, a component of the RZZ complex. Interacts with mdf-1 and mdf-2.

It is found in the chromosome. The protein resides in the centromere. It localises to the kinetochore. Its subcellular location is the cytoplasm. The protein localises to the cytoskeleton. It is found in the spindle pole. Transient kinetochore component required for chromosome and spindle pole alignment and chromosome segregation during mitosis. Functions downstream of the RZZ complex to mediate kinetochore-microtubule attachments and nuclear envelope breakdown during cell division. Required for kinetochore assembly and localizes the checkpoint proteins mdf-1 and mdf-2, dynein and dynactin to unattached kinetochores. Dynein is believed to control the initial lateral interaction between the kinetochore and spindle microtubules and to facilitate the subsequent formation of end-on kinetochore-microtubule attachments mediated by the NDC80 complex. Required for embryonic development. In Caenorhabditis elegans, this protein is Spindly-like protein spdl-1.